The sequence spans 376 residues: Natterin-2 (376 aa).

Positions 1–18 are cleaved as a signal peptide; that stretch reads MNLSVLLVTLLLLSWTSA. Positions 19-27 are excised as a propeptide; that stretch reads EKDLKVRVA.

It belongs to the natterin family. In terms of processing, contains 4 disulfide bonds. Expressed by the venom gland.

Its subcellular location is the secreted. Its activity is regulated as follows. Inhibited by tissue-kallikrein inhibitor TKI and trasylol. Plasma kallikrein inhibitor PKSI527 and classical inhibitors of serine-, metallo-, thiol- or aspartate-peptidases evokes a minor inhibition of the peptide digestion. Functionally, shows nociceptive, edema-inducing and kininogenase activity with release of kallidin from low molecular weight kininogen. The cleavage occurs at Met-Lys bonds. The polypeptide is Natterin-2 (Thalassophryne nattereri (Copper Joe toadfish)).